A 372-amino-acid polypeptide reads, in one-letter code: Fork head domain-containing protein FD4 (372 aa).

Residues 12 to 103 constitute a DNA-binding region (fork-head); that stretch reads QKPPYSYISL…FDMFENGSLL (92 aa). 2 disordered regions span residues 225 to 245 and 261 to 281; these read ESLI…DEDD and PTTP…RTED.

Expressed in early embryogenesis in 14 symmetrical pairs of segmentally arranged neuroblasts. Also, later in embryogenesis, in a cluster of cells in head region.

Its subcellular location is the nucleus. Functionally, involved in development during embryogenesis. In Drosophila melanogaster (Fruit fly), this protein is Fork head domain-containing protein FD4 (fd96Ca).